A 256-amino-acid chain; its full sequence is Myeloblastin (256 aa).

Residues 1-25 form the signal peptide; sequence MAHRPPSPALASVLLALLLSGAARA. The propeptide occupies 26-27; sequence AE. Residues 28–248 form the Peptidase S1 domain; sequence IVGGHEAQPH…YVDWIRSTLR (221 aa). Cysteine 56 and cysteine 72 form a disulfide bridge. Active-site charge relay system residues include histidine 71 and aspartate 118. N-linked (GlcNAc...) asparagine glycosylation is found at asparagine 129 and asparagine 174. Cystine bridges form between cysteine 152–cysteine 209, cysteine 182–cysteine 188, and cysteine 199–cysteine 224. The active-site Charge relay system is serine 203. The propeptide occupies 249–256; sequence RVEAKGRP.

The protein belongs to the peptidase S1 family. Elastase subfamily. As to quaternary structure, may form dimers. Interacts with CD177; the interaction tethers PRTN3 to the cell surface; the interaction is direct. Interacts with SERPINB1. Interacts with ADGRG3. Expressed in polymorphonuclear leukocytes (at protein level). Expressed in neutrophils (at protein level). Expressed in differentiating neutrophils.

It is found in the cytoplasmic granule. It localises to the secreted. Its subcellular location is the cell membrane. The protein localises to the membrane raft. It catalyses the reaction Hydrolysis of proteins, including elastin, by preferential cleavage: -Ala-|-Xaa- &gt; -Val-|-Xaa-.. Inhibited by phenylmethanesulfonyl fluoride (PMSF) and diisopropyl fluorophosphate (DFP). Its function is as follows. Serine protease that degrades elastin, fibronectin, laminin, vitronectin, and collagen types I, III, and IV (in vitro). By cleaving and activating receptor F2RL1/PAR-2, enhances endothelial cell barrier function and thus vascular integrity during neutrophil transendothelial migration. Plays a role in neutrophil transendothelial migration, probably when associated with CD177. Triggers inflammatory processes in neutrophils by interacting with ADGRG3 upstream of F2RL1/PAR2 activation. This Homo sapiens (Human) protein is Myeloblastin (PRTN3).